The primary structure comprises 223 residues: Urease accessory protein UreF (223 aa).

This sequence belongs to the UreF family. As to quaternary structure, ureD, UreF and UreG form a complex that acts as a GTP-hydrolysis-dependent molecular chaperone, activating the urease apoprotein by helping to assemble the nickel containing metallocenter of UreC. The UreE protein probably delivers the nickel.

Its subcellular location is the cytoplasm. Its function is as follows. Required for maturation of urease via the functional incorporation of the urease nickel metallocenter. This Paenarthrobacter aurescens (strain TC1) protein is Urease accessory protein UreF.